Here is a 347-residue protein sequence, read N- to C-terminus: S-adenosylmethionine decarboxylase proenzyme 4 (347 aa).

Residues E7 and E10 contribute to the active site. Substrate is bound at residue E66. The active-site Schiff-base intermediate with substrate; via pyruvic acid is the S67. S67 is subject to Pyruvic acid (Ser); by autocatalysis. Residue C81 is the Proton donor; for catalytic activity of the active site. Residues S237 and H250 each act as proton acceptor; for processing activity in the active site. E254 contacts substrate.

Belongs to the eukaryotic AdoMetDC family. Pyruvate serves as cofactor. Is synthesized initially as an inactive proenzyme. Formation of the active enzyme involves a self-maturation process in which the active site pyruvoyl group is generated from an internal serine residue via an autocatalytic post-translational modification. Two non-identical subunits are generated from the proenzyme in this reaction, and the pyruvate is formed at the N-terminus of the alpha chain, which is derived from the carboxyl end of the proenzyme. The post-translation cleavage follows an unusual pathway, termed non-hydrolytic serinolysis, in which the side chain hydroxyl group of the serine supplies its oxygen atom to form the C-terminus of the beta chain, while the remainder of the serine residue undergoes an oxidative deamination to produce ammonia and the pyruvoyl group blocking the N-terminus of the alpha chain.

It carries out the reaction S-adenosyl-L-methionine + H(+) = S-adenosyl 3-(methylsulfanyl)propylamine + CO2. Its pathway is amine and polyamine biosynthesis; S-adenosylmethioninamine biosynthesis; S-adenosylmethioninamine from S-adenosyl-L-methionine: step 1/1. In terms of biological role, essential for biosynthesis of the polyamines spermidine and spermine. Essential for polyamine homeostasis, and normal plant embryogenesis, growth and development. This Arabidopsis thaliana (Mouse-ear cress) protein is S-adenosylmethionine decarboxylase proenzyme 4.